A 273-amino-acid polypeptide reads, in one-letter code: MPELPEVETSRLGITPHLQGQTIKAIVVRTDKLRWPIPQELQKLVGQRVQSIRRRAKYLMIDTPEGSAIIHLGMSGSLRVLDEEVPSAKHDHVDLVLENGKVLRYNDPRKFGAWLYSEVGVAHQVLSKLGPEPLTNEFNSEYFAEKAKNKKTVVKQFIMNNAVVVGVGNIYASESLFMAQIHPKTPVGSLKASQITVLVAEIKKVLETAIKQGGTTLKDFNQVDGKPGYFAQELKVYGRAGKECPVCSSKIEEEKIGQRNSFWCGKCQFLAED.

The Schiff-base intermediate with DNA role is filled by P2. E3 acts as the Proton donor in catalysis. K57 serves as the catalytic Proton donor; for beta-elimination activity. Residues H90, R109, and K150 each contribute to the DNA site. The segment at 235–269 adopts an FPG-type zinc-finger fold; it reads KVYGRAGKECPVCSSKIEEEKIGQRNSFWCGKCQF. The active-site Proton donor; for delta-elimination activity is R259.

Belongs to the FPG family. Monomer. Zn(2+) is required as a cofactor.

It carries out the reaction Hydrolysis of DNA containing ring-opened 7-methylguanine residues, releasing 2,6-diamino-4-hydroxy-5-(N-methyl)formamidopyrimidine.. The enzyme catalyses 2'-deoxyribonucleotide-(2'-deoxyribose 5'-phosphate)-2'-deoxyribonucleotide-DNA = a 3'-end 2'-deoxyribonucleotide-(2,3-dehydro-2,3-deoxyribose 5'-phosphate)-DNA + a 5'-end 5'-phospho-2'-deoxyribonucleoside-DNA + H(+). In terms of biological role, involved in base excision repair of DNA damaged by oxidation or by mutagenic agents. Acts as a DNA glycosylase that recognizes and removes damaged bases. Has a preference for oxidized purines, such as 7,8-dihydro-8-oxoguanine (8-oxoG). Has AP (apurinic/apyrimidinic) lyase activity and introduces nicks in the DNA strand. Cleaves the DNA backbone by beta-delta elimination to generate a single-strand break at the site of the removed base with both 3'- and 5'-phosphates. This is Formamidopyrimidine-DNA glycosylase from Aliivibrio fischeri (strain MJ11) (Vibrio fischeri).